The primary structure comprises 100 residues: Aspartyl/glutamyl-tRNA(Asn/Gln) amidotransferase subunit C (100 aa).

Belongs to the GatC family. Heterotrimer of A, B and C subunits.

The enzyme catalyses L-glutamyl-tRNA(Gln) + L-glutamine + ATP + H2O = L-glutaminyl-tRNA(Gln) + L-glutamate + ADP + phosphate + H(+). It carries out the reaction L-aspartyl-tRNA(Asn) + L-glutamine + ATP + H2O = L-asparaginyl-tRNA(Asn) + L-glutamate + ADP + phosphate + 2 H(+). Its function is as follows. Allows the formation of correctly charged Asn-tRNA(Asn) or Gln-tRNA(Gln) through the transamidation of misacylated Asp-tRNA(Asn) or Glu-tRNA(Gln) in organisms which lack either or both of asparaginyl-tRNA or glutaminyl-tRNA synthetases. The reaction takes place in the presence of glutamine and ATP through an activated phospho-Asp-tRNA(Asn) or phospho-Glu-tRNA(Gln). The chain is Aspartyl/glutamyl-tRNA(Asn/Gln) amidotransferase subunit C from Rickettsia canadensis (strain McKiel).